A 368-amino-acid chain; its full sequence is Aspartate-semialdehyde dehydrogenase (368 aa).

NADP(+) contacts are provided by residues 10 to 13 (RGMV), 37 to 38 (TS), and Gln74. Residue Arg103 participates in phosphate binding. Cys136 functions as the Acyl-thioester intermediate in the catalytic mechanism. The residue at position 136 (Cys136) is an S-cysteinyl cysteine; in inhibited form. A substrate-binding site is contributed by Gln163. NADP(+)-binding positions include 166-167 (SG) and Pro194. Glu242 is a binding site for substrate. Lys245 is a binding site for phosphate. Residue Arg268 coordinates substrate. His275 acts as the Proton acceptor in catalysis. Residue Gln351 participates in NADP(+) binding.

The protein belongs to the aspartate-semialdehyde dehydrogenase family. In terms of assembly, homodimer.

It catalyses the reaction L-aspartate 4-semialdehyde + phosphate + NADP(+) = 4-phospho-L-aspartate + NADPH + H(+). Its pathway is amino-acid biosynthesis; L-lysine biosynthesis via DAP pathway; (S)-tetrahydrodipicolinate from L-aspartate: step 2/4. It participates in amino-acid biosynthesis; L-methionine biosynthesis via de novo pathway; L-homoserine from L-aspartate: step 2/3. It functions in the pathway amino-acid biosynthesis; L-threonine biosynthesis; L-threonine from L-aspartate: step 2/5. Catalyzes the NADPH-dependent formation of L-aspartate-semialdehyde (L-ASA) by the reductive dephosphorylation of L-aspartyl-4-phosphate. This Salmonella typhi protein is Aspartate-semialdehyde dehydrogenase.